Here is a 60-residue protein sequence, read N- to C-terminus: Large ribosomal subunit protein bL32 (60 aa).

It belongs to the bacterial ribosomal protein bL32 family.

The polypeptide is Large ribosomal subunit protein bL32 (Petrotoga mobilis (strain DSM 10674 / SJ95)).